A 419-amino-acid chain; its full sequence is Protein transport protein sec9 (419 aa).

Residues 1 to 11 (MKKLFKKKKGV) are compositionally biased toward basic residues. Disordered stretches follow at residues 1 to 60 (MKKL…TYGS), 116 to 143 (ARKD…PSQD), and 156 to 186 (ARIQ…EGYR). Over residues 21-32 (ESNSNTATNAPS) the composition is skewed to polar residues. The span at 36–60 (GGTTANSYSSNSYNDNNNSNSTYGS) shows a compositional bias: low complexity. The residue at position 141 (Ser-141) is a Phosphoserine. 2 t-SNARE coiled-coil homology domains span residues 203–265 (QFVK…AREL) and 356–418 (DAME…LRHI).

The protein belongs to the SNAP-25 family.

Has a role in cell separation, a final step of cytokinesis and in the assembly of the forespore membrane. May have a role in the transport of secretory proteins to these growing sites. The sequence is that of Protein transport protein sec9 (sec9) from Schizosaccharomyces pombe (strain 972 / ATCC 24843) (Fission yeast).